The primary structure comprises 380 residues: Chromo domain-containing protein 2 (380 aa).

2 disordered regions span residues 14 to 58 (ISES…SLYG) and 100 to 156 (KLSP…VPLN). Positions 33-52 (NSINNKSSTASLESPQNGSW) are enriched in polar residues. The segment covering 108–119 (EDSEDKKEEDES) has biased composition (acidic residues). Residues 121 to 140 (SYKNEFKSSSSASVSSNFEK) show a composition bias toward low complexity. Positions 176–238 (FAVEMILDSR…SRGGKPDLSS (63 aa)) constitute a Chromo domain. The interval 250-273 (SNEASYVEKDESSNSDDSISYKRR) is disordered.

Its subcellular location is the nucleus. Component of the kinetochore which plays a role in stabilizing microtubules and so allowing accurate chromosome segregation. The polypeptide is Chromo domain-containing protein 2 (chp2) (Schizosaccharomyces pombe (strain 972 / ATCC 24843) (Fission yeast)).